The primary structure comprises 173 residues: MAQAVDASKNLPSDPRNREVVFPAFRDPQLGNLETPVNASPLSKWFINNLPAYRPGLSPARRGLEVGMAHGYWIFGPFAKLGPLRDTDNANLAGLLAAIGLVVLLTGALSLYSNSNPPKALPSVTVPNPPVDAFNSKESWNNFASSFLIGGIGGAVVAYFLTSNLGIIQGLFG.

The next 2 helical transmembrane spans lie at 92–112 (LAGL…LSLY) and 148–168 (LIGG…LGII).

Belongs to the PsaL family.

It localises to the cellular thylakoid membrane. The chain is Photosystem I reaction center subunit XI from Nostoc punctiforme (strain ATCC 29133 / PCC 73102).